Reading from the N-terminus, the 143-residue chain is Large-conductance mechanosensitive channel (143 aa).

2 consecutive transmembrane segments (helical) span residues 10–30 and 89–109; these read FAVK…GAFS and GSFI…FLMV.

The protein belongs to the MscL family. As to quaternary structure, homopentamer.

The protein localises to the cell inner membrane. Functionally, channel that opens in response to stretch forces in the membrane lipid bilayer. May participate in the regulation of osmotic pressure changes within the cell. This Burkholderia ambifaria (strain ATCC BAA-244 / DSM 16087 / CCUG 44356 / LMG 19182 / AMMD) (Burkholderia cepacia (strain AMMD)) protein is Large-conductance mechanosensitive channel.